Consider the following 566-residue polypeptide: ATP-binding protein SyrD (566 aa).

In terms of domain architecture, ABC transmembrane type-1 spans 22-301; the sequence is HPWLTFFTLL…LVSAMPMLAQ (280 aa). 6 helical membrane-spanning segments follow: residues 24–44, 61–81, 132–152, 158–178, 250–270, and 279–299; these read WLTFFTLLTGLISGVASIAVV, LFWFVGLSVVALLFRNGASLF, LLIMPTILVESAVFLFGIAYL, VVFAITISLMILGVAMYLLFF, QLTLSLLVGCLLFAAPMFAVI, and VLAVLYIMGPLVMLVSAMPML. Positions 343 to 566 constitute an ABC transporter domain; the sequence is IQLKNVHMNY…VKCAVEGKRA (224 aa). Residue 380–387 coordinates ATP; that stretch reads GGNGCGKS.

It belongs to the ABC transporter superfamily. As to quaternary structure, dimer.

It localises to the cell inner membrane. Functionally, ATP-driven efflux pump necessary for the secretion of syringomycin. May specifically bind syringomycin and translocate it to the periplasmic space. SyrD is also required for full expression of the syrB gene. This Pseudomonas syringae pv. syringae protein is ATP-binding protein SyrD (syrD).